The chain runs to 223 residues: Phosphoribosylformylglycinamidine synthase subunit PurQ (223 aa).

In terms of domain architecture, Glutamine amidotransferase type-1 spans 2–223 (KFAVLKFPGS…MVNSWREQNV (222 aa)). Residue C85 is the Nucleophile of the active site. Active-site residues include H193 and E195.

As to quaternary structure, part of the FGAM synthase complex composed of 1 PurL, 1 PurQ and 2 PurS subunits.

It is found in the cytoplasm. It carries out the reaction N(2)-formyl-N(1)-(5-phospho-beta-D-ribosyl)glycinamide + L-glutamine + ATP + H2O = 2-formamido-N(1)-(5-O-phospho-beta-D-ribosyl)acetamidine + L-glutamate + ADP + phosphate + H(+). The enzyme catalyses L-glutamine + H2O = L-glutamate + NH4(+). It participates in purine metabolism; IMP biosynthesis via de novo pathway; 5-amino-1-(5-phospho-D-ribosyl)imidazole from N(2)-formyl-N(1)-(5-phospho-D-ribosyl)glycinamide: step 1/2. Part of the phosphoribosylformylglycinamidine synthase complex involved in the purines biosynthetic pathway. Catalyzes the ATP-dependent conversion of formylglycinamide ribonucleotide (FGAR) and glutamine to yield formylglycinamidine ribonucleotide (FGAM) and glutamate. The FGAM synthase complex is composed of three subunits. PurQ produces an ammonia molecule by converting glutamine to glutamate. PurL transfers the ammonia molecule to FGAR to form FGAM in an ATP-dependent manner. PurS interacts with PurQ and PurL and is thought to assist in the transfer of the ammonia molecule from PurQ to PurL. The sequence is that of Phosphoribosylformylglycinamidine synthase subunit PurQ from Staphylococcus saprophyticus subsp. saprophyticus (strain ATCC 15305 / DSM 20229 / NCIMB 8711 / NCTC 7292 / S-41).